A 314-amino-acid polypeptide reads, in one-letter code: Glyceraldehyde-3-phosphate dehydrogenase A, chloroplastic (314 aa).

Residues 5 to 6, D29, and R74 each bind NADP(+); that span reads RI. C13 and C283 form a disulfide bridge. D-glyceraldehyde 3-phosphate contacts are provided by residues 147-149, T178, R193, 206-207, and R229; these read SCT and TG. The active-site Nucleophile is C148. NADP(+) is bound at residue N311.

Belongs to the glyceraldehyde-3-phosphate dehydrogenase family. In terms of assembly, homotetramer.

It is found in the plastid. It localises to the chloroplast. It catalyses the reaction D-glyceraldehyde 3-phosphate + phosphate + NADP(+) = (2R)-3-phospho-glyceroyl phosphate + NADPH + H(+). Its pathway is carbohydrate biosynthesis; Calvin cycle. The protein is Glyceraldehyde-3-phosphate dehydrogenase A, chloroplastic (GapA) of Scenedesmus vacuolatus (Green alga).